The sequence spans 404 residues: NADH-quinone oxidoreductase subunit D 1 (404 aa).

The protein belongs to the complex I 49 kDa subunit family. In terms of assembly, NDH-1 is composed of 14 different subunits. Subunits NuoB, C, D, E, F, and G constitute the peripheral sector of the complex.

Its subcellular location is the cell membrane. The catalysed reaction is a quinone + NADH + 5 H(+)(in) = a quinol + NAD(+) + 4 H(+)(out). NDH-1 shuttles electrons from NADH, via FMN and iron-sulfur (Fe-S) centers, to quinones in the respiratory chain. The immediate electron acceptor for the enzyme in this species is believed to be a menaquinone. Couples the redox reaction to proton translocation (for every two electrons transferred, four hydrogen ions are translocated across the cytoplasmic membrane), and thus conserves the redox energy in a proton gradient. The sequence is that of NADH-quinone oxidoreductase subunit D 1 from Symbiobacterium thermophilum (strain DSM 24528 / JCM 14929 / IAM 14863 / T).